Consider the following 225-residue polypeptide: Small ribosomal subunit protein eS1 (225 aa).

Residues 206–216 (PVEEPAAEEVA) are compositionally biased toward acidic residues. The disordered stretch occupies residues 206 to 225 (PVEEPAAEEVAEAPAAETQE).

The protein belongs to the eukaryotic ribosomal protein eS1 family.

The polypeptide is Small ribosomal subunit protein eS1 (Methanococcus maripaludis (strain C5 / ATCC BAA-1333)).